Consider the following 1053-residue polypeptide: Phosphoenolpyruvate carboxylase (1053 aa).

His-246 is a catalytic residue. Positions 461–473 are enriched in basic and acidic residues; that stretch reads RNTRLQQQQEKDP. The segment at 461–480 is disordered; the sequence is RNTRLQQQQEKDPTTPLPEY. Lys-699 is an active-site residue.

This sequence belongs to the PEPCase type 1 family. The cofactor is Mg(2+).

The enzyme catalyses oxaloacetate + phosphate = phosphoenolpyruvate + hydrogencarbonate. Its function is as follows. Forms oxaloacetate, a four-carbon dicarboxylic acid source for the tricarboxylic acid cycle. This Synechococcus sp. (strain ATCC 27144 / PCC 6301 / SAUG 1402/1) (Anacystis nidulans) protein is Phosphoenolpyruvate carboxylase (ppc).